The sequence spans 391 residues: MTAAQGNSNETLFSSYKMGRFDLSHRVVLAPMTRCRALNGVPNAALAEYYAQRTTPGGFLISEGTMVSPGSAGFPHVPGIYSDEQVEAWKQVVEAVHAKGGFIFCQLWHVGRASHAVYQPNGGSPISSTNKPISENRWRVLLPDGSHVKYPKPRALEASEIPRVVEDYCLSALNAIRAGFDGIEIHGAHGYLIDQFLKDGINDRTDQYGGSIANRCRFLKQVVEGVVSAIGASKVGVRVSPAIDHLDATDSDPLSLGLAVVGMLNKLQGVNGSKLAYLHVTQPRYHAYGQTESGRQGSDEEEAKLMKSLRMAYNGTFMSSGGFNKELGMQAVQQGDADLVSYGRLFIANPDLVSRFKIDGELNKYNRKTFYTQDPVVGYTDYPFLAPFSRL.

The residue at position 1 (Met1) is an N-acetylmethionine. Thr2 is modified (N-acetylthreonine; in 12-oxophytodienoate reductase 3, N-terminally processed). Residues 31–33, Gly64, and Gln106 contribute to the FMN site; that span reads PMT. His186 is a substrate binding site. Catalysis depends on Tyr191, which acts as the Proton donor. Arg238 serves as a coordination point for FMN. Residue Arg284 coordinates substrate. FMN is bound by residues 320-322 and 343-344; these read SGG and GR. Positions 389–391 match the Microbody targeting signal motif; that stretch reads SRL.

This sequence belongs to the NADH:flavin oxidoreductase/NADH oxidase family. It depends on FMN as a cofactor. In terms of tissue distribution, expressed in green seedling, leaves, flowers (anthers, pistil, petal and stamen), and to a lower extent in roots and siliques. Specifically expressed in filament during anther dehiscence initiation.

The protein localises to the peroxisome. The catalysed reaction is (1S,2S)-OPC-8 + NADP(+) = (9S,13S,15Z)-12-oxophyto-10,15-dienoate + NADPH + H(+). The protein operates within lipid metabolism; oxylipin biosynthesis. In terms of biological role, specifically cleaves olefinic bonds in cyclic enones. Involved in the biosynthesis of jasmonic acid (JA) and perhaps in biosynthesis or metabolism of other oxylipin signaling moleclules. Required for the spatial and temporal regulation of JA levels during dehiscence of anthers, promoting the stomium degeneration program. In vitro, reduces 9S,13S-12-oxophytodienoic acid (9S,13S-OPDA) and 9R,13R-OPDA to 9S,13S-OPC-8:0 and 9R,13R-OPC-8:0, respectively. Can detoxify the explosive 2,4,6-trinitrotoluene (TNT) in vitro by catalyzing its nitroreduction to form hydroxylamino-dinitrotoluene (HADNT). This Arabidopsis thaliana (Mouse-ear cress) protein is 12-oxophytodienoate reductase 3.